Reading from the N-terminus, the 298-residue chain is Protease HtpX homolog (298 aa).

2 helical membrane passes run 15–35 and 38–58; these read LIMVLFVVILTLVGAGLGYLF and SPWTGIIIALAGSLIYLLIMW. His-143 is a Zn(2+) binding site. The active site involves Glu-144. Zn(2+) is bound at residue His-147. 2 helical membrane passes run 153-173 and 197-217; these read ILLSTIGVVLVGVISFISGIA and IIFKVIAIVFVLILGPISASL. Glu-227 is a binding site for Zn(2+).

The protein belongs to the peptidase M48B family. It depends on Zn(2+) as a cofactor.

The protein localises to the cell membrane. This Lactobacillus acidophilus (strain ATCC 700396 / NCK56 / N2 / NCFM) protein is Protease HtpX homolog.